Here is a 692-residue protein sequence, read N- to C-terminus: Junctophilin-2 (692 aa).

The Cytoplasmic portion of the chain corresponds to 1–670 (MSGGRFDFDD…EVEVEEVPNT (670 aa)). MORN repeat units lie at residues 14–36 (YCGG…KGQG), 38–59 (YSGS…SGNT), 60–79 (FEGY…TKGR), 82–104 (YKGE…NSGA), 106–128 (YEGT…DGGT), and 129–151 (YQGQ…PYGM). Phosphoserine is present on residues serine 162 and serine 165. Disordered regions lie at residues 164–190 (SSLR…LPLP) and 246–273 (LSSG…AAPF). MORN repeat units follow at residues 285–307 (YMGE…SGLR) and 308–330 (YEGE…DGHR). The short motif at 345-359 (KRRVLPLKSNKVRQK) is the Bipartite nuclear localization signal element. The tract at residues 439–661 (NSESLLEPRE…KEVAQEAEAE (223 aa)) is disordered. 3 positions are modified to phosphoserine: serine 440, serine 442, and serine 462. The segment covering 457–471 (ERPRESPQLHERETP) has biased composition (basic and acidic residues). Threonine 470 is modified (phosphothreonine). The segment covering 474 to 487 (EGGPPSPAGTPPQP) has biased composition (pro residues). A Phosphoserine modification is found at serine 479. Threonine 483 carries the phosphothreonine modification. The Nuclear localization signal motif lies at 488–492 (KRPRP). 2 positions are modified to phosphoserine: serine 527 and serine 533. Over residues 573–582 (PLEDEPEPEP) the composition is skewed to acidic residues. Phosphoserine occurs at positions 589, 593, 604, and 609. The segment covering 627–640 (AEPKAKARKTEARG) has biased composition (basic and acidic residues). A helical; Anchor for type IV membrane protein transmembrane segment spans residues 671–691 (VLICMVILLNIGLAILFVHLL).

It belongs to the junctophilin family. Interacts with TRPC3. Interacts with BAG5 and HSPA8; the interaction with HSPA8 is increased in the presence of BAG5. Junctophilin-2 N-terminal fragment: Interacts with MEF2C. Post-translationally, proteolytically cleaved by calpain in response to cardiac stress. The major cleavage site takes place at the C-terminus and leads to the release of the Junctophilin-2 N-terminal fragment chain (JP2NT). Phosphorylation on Ser-165, probably by PKC, affects RYR1-mediated calcium ion release, interaction with TRPC3, and skeletal muscle myotubule development.

The protein resides in the cell membrane. The protein localises to the sarcoplasmic reticulum membrane. Its subcellular location is the endoplasmic reticulum membrane. It is found in the nucleus. Its function is as follows. Membrane-binding protein that provides a structural bridge between the plasma membrane and the sarcoplasmic reticulum and is required for normal excitation-contraction coupling in cardiomyocytes. Provides a structural foundation for functional cross-talk between the cell surface and intracellular Ca(2+) release channels by maintaining the 12-15 nm gap between the sarcolemma and the sarcoplasmic reticulum membranes in the cardiac dyads. Necessary for proper intracellular Ca(2+) signaling in cardiac myocytes via its involvement in ryanodine receptor-mediated calcium ion release. Contributes to the construction of skeletal muscle triad junctions. Functionally, transcription repressor required to safeguard against the deleterious effects of cardiac stress. Generated following cleavage of the Junctophilin-2 chain by calpain in response to cardiac stress in cardiomyocytes. Following cleavage and release from the membrane, translocates to the nucleus, binds DNA and represses expression of genes implicated in cell growth and differentiation, hypertrophy, inflammation and fibrosis. Modifies the transcription profile and thereby attenuates pathological remodeling in response to cardiac stress. Probably acts by competing with MEF2 transcription factors and TATA-binding proteins. The chain is Junctophilin-2 from Rattus norvegicus (Rat).